The following is a 508-amino-acid chain: Cytochrome P450 monooxygenase tenA (508 aa).

Residues V8–L24 traverse the membrane as a helical segment. Position 456 (C456) interacts with heme.

Belongs to the cytochrome P450 family. It depends on heme as a cofactor.

The protein resides in the membrane. It functions in the pathway secondary metabolite biosynthesis. In terms of biological role, cytochrome P450 monooxygenase; part of the gene cluster that mediates the biosynthesis of tenellin-type 2-pyridones, iron-chelating compounds involved in iron stress tolerance, competition with the natural competitor fungus Metarhizium robertsii and insect hosts infection. TenA catalyzes an oxidative ring expansion of pretenellin A and 14-hydropretellenin A to form the 2-pyridone core, leading to the production of pretenellin B and pyridovericin, respectively. The pathway begins with the assembly of the polyketide-amino acid backbone by the hybrid PKS-NRPS tenS with the help of the enoyl reductase tenC. These enzymes catalyze the synthesis of the pyrrolidine-2-dione intermediates pretellinin A, 11-hydropretellenin A, 12-hydropretellenin A, 13-hydropretellenin A, 14-hydropretellenin A, 12-oxopretellenin A and prototellinin D. The cytochrome P450 monooxygenase tenA then catalyzes an oxidative ring expansion of pretenellin A and 14-hydropretellenin A to form the 2-pyridone core, leading to pretenellin B and pyridovericin, respectively. The cytochrome P450 monooxygenase tenB is then required for the selective N-hydroxylation of the 2-pyridone nitrogen of yield tellinin and 15-hydroxytellenin (15-HT), respectively. The UDP-glucosyltransferase GT1 and the methyltransferase MT1, located outside the tenS gene cluster, contribute to the stepwise glycosylation and methylation of 15-HT to obtain the glycoside pyridovericin-N-O-(4-O-methyl-beta-D-glucopyranoside) (PMGP). Additional related compounds such as 1-O-methyl-15-HT, (8Z)-1-O-methyl-15-HT, and O-methyltenellin A are also produced but the enzymes involved in their biosynthesis have still to be determined. This Beauveria bassiana (White muscardine disease fungus) protein is Cytochrome P450 monooxygenase tenA.